The chain runs to 753 residues: Neuroendocrine convertase 1 (753 aa).

Positions 1 to 27 (MGRRAWTLQCTAFSLFCAWCAMNSVKA) are cleaved as a signal peptide. The propeptide occupies 28–110 (KKQFVNEWAA…QQYEKERSKR (83 aa)). Positions 129–450 (QWYLQDTRMT…FGLLNAKALV (322 aa)) constitute a Peptidase S8 domain. The active-site Charge relay system is the D167. N173 carries an N-linked (GlcNAc...) asparagine glycan. H208 functions as the Charge relay system in the catalytic mechanism. 2 cysteine pairs are disulfide-bonded: C225–C374 and C317–C347. The active-site Charge relay system is the S382. N-linked (GlcNAc...) asparagine glycosylation is present at N401. Residues 460-597 (SVPEKKECVV…KLILHGTSSQ (138 aa)) form the P/Homo B domain. The cysteines at positions 467 and 494 are disulfide-linked. Disordered regions lie at residues 617 to 657 (RRGV…RRDE) and 676 to 695 (SKNS…KPNI).

The protein belongs to the peptidase S8 family. Furin subfamily. The cofactor is Ca(2+).

The protein localises to the cytoplasmic vesicle. Its subcellular location is the secretory vesicle. It catalyses the reaction Release of protein hormones, neuropeptides and renin from their precursors, generally by hydrolysis of -Lys-Arg-|- bonds.. Functionally, involved in the processing of hormone and other protein precursors at sites comprised of pairs of basic amino acid residues. Substrates include POMC, renin, enkephalin, dynorphin, somatostatin, insulin and AGRP. The sequence is that of Neuroendocrine convertase 1 (PCSK1) from Bos taurus (Bovine).